Here is a 566-residue protein sequence, read N- to C-terminus: Oxygen-dependent choline dehydrogenase (566 aa).

7–36 (DYIICGAGSAGNVLATRLTEDPDVTVLLLE) contributes to the FAD binding site. Residues 180–202 (NGYQQEGFGPMDRTVTPKGRRAS) are disordered. The active-site Proton acceptor is histidine 474.

This sequence belongs to the GMC oxidoreductase family. The cofactor is FAD.

It carries out the reaction choline + A = betaine aldehyde + AH2. It catalyses the reaction betaine aldehyde + NAD(+) + H2O = glycine betaine + NADH + 2 H(+). It functions in the pathway amine and polyamine biosynthesis; betaine biosynthesis via choline pathway; betaine aldehyde from choline (cytochrome c reductase route): step 1/1. In terms of biological role, involved in the biosynthesis of the osmoprotectant glycine betaine. Catalyzes the oxidation of choline to betaine aldehyde and betaine aldehyde to glycine betaine at the same rate. In Burkholderia cenocepacia (strain HI2424), this protein is Oxygen-dependent choline dehydrogenase.